Here is a 38-residue protein sequence, read N- to C-terminus: Photosystem II reaction center protein L (38 aa).

Residues 17–37 form a helical membrane-spanning segment; the sequence is SLYWGLLLIFVLAVLFSNYFF.

This sequence belongs to the PsbL family. In terms of assembly, PSII is composed of 1 copy each of membrane proteins PsbA, PsbB, PsbC, PsbD, PsbE, PsbF, PsbH, PsbI, PsbJ, PsbK, PsbL, PsbM, PsbT, PsbX, PsbY, PsbZ, Psb30/Ycf12, at least 3 peripheral proteins of the oxygen-evolving complex and a large number of cofactors. It forms dimeric complexes.

Its subcellular location is the plastid. The protein localises to the chloroplast thylakoid membrane. Functionally, one of the components of the core complex of photosystem II (PSII). PSII is a light-driven water:plastoquinone oxidoreductase that uses light energy to abstract electrons from H(2)O, generating O(2) and a proton gradient subsequently used for ATP formation. It consists of a core antenna complex that captures photons, and an electron transfer chain that converts photonic excitation into a charge separation. This subunit is found at the monomer-monomer interface and is required for correct PSII assembly and/or dimerization. The chain is Photosystem II reaction center protein L from Huperzia lucidula (Shining clubmoss).